A 583-amino-acid chain; its full sequence is MLSFKSLLAAAVVASSALASASNQVALYWGQNGAGGQERLAQYCQEADVDIILLSFLNLFPDPLNVNFANQCGNTFESGLLHCSQIGADIKTCQSLGKTVLLSLGGGVGDYGFSDVASATKFADTLWNKFGAGEDPERPFDDAVVDGFDFDIEHGGATGYPELATALRGKFAKDTSKNYFLSAAPQCPYPDASLGDLLSKVPLDFAFIQFYNNYCSINGQFNYDTWSKFADSAPNKNIKLFVGVPATSNIAGYVDTSKLSSAIEEIKCDSHFAGVSLWDASGAWLNTDEKGENFVVQVKNVLNQNACVAPSSSATTQSTTTTSSAVTQSTTTTSAAITQSATTTSAAVATKSNQIVTSSSSSSSSIFYGNSTTESSTGIATGTVLPTGSNENAATTGSGSNTKLAISTVTDVQKTVITITSCSEHKCVATPVTTGVVVVTDIDTVYTTYCPLTNSQVYVSVKTVVCTEETCVPSPTSTSQKPKASTTIKGVEKGQTTSYPVVGTTEGVKKIVTTSAQTVGSSTKYVTIELTSTITPVTYPTSVASNGTNTTVPVFTFEGGAAVANSLNSVWFTVPFLLAAFAF.

A signal peptide spans 1 to 19; it reads MLSFKSLLAAAVVASSALA. The GH18 domain maps to 23 to 305; that stretch reads NQVALYWGQN…VQVKNVLNQN (283 aa). E153 functions as the Proton donor in the catalytic mechanism. N370, N546, and N549 each carry an N-linked (GlcNAc...) asparagine glycan. G560 carries the GPI-anchor amidated glycine lipid modification. Residues 561–583 constitute a propeptide, removed in mature form; it reads AAVANSLNSVWFTVPFLLAAFAF.

The protein belongs to the glycosyl hydrolase 18 family. Chitinase class III subfamily. In terms of processing, the GPI-anchor is attached to the protein in the endoplasmic reticulum and serves to target the protein to the cell surface. There, the glucosamine-inositol phospholipid moiety is cleaved off and the GPI-modified mannoprotein is covalently attached via its lipidless GPI glycan remnant to the 1,6-beta-glucan of the outer cell wall layer. Proteolytic cleavage by SAP9 and SAP10 leads to the cell wall release of CHT2 and increased chitinase activity, suggesting a direct influence of SAP9 and SAP10 on CHT2 function.

The protein resides in the secreted. It localises to the cell wall. It is found in the membrane. It catalyses the reaction Random endo-hydrolysis of N-acetyl-beta-D-glucosaminide (1-&gt;4)-beta-linkages in chitin and chitodextrins.. Functionally, chitinase involved in the remodeling of chitin in the fungal cell wall. Plays a role in cell separation. The chain is Chitinase 2 (CHT2) from Candida albicans (strain SC5314 / ATCC MYA-2876) (Yeast).